The primary structure comprises 394 residues: Ketoisovalerate oxidoreductase subunit VorA (394 aa).

In terms of assembly, heterotetramer of one alpha, one beta, one delta and one gamma chain.

The enzyme catalyses 3-methyl-2-oxobutanoate + 2 oxidized [2Fe-2S]-[ferredoxin] + CoA = 2-methylpropanoyl-CoA + 2 reduced [2Fe-2S]-[ferredoxin] + CO2 + H(+). The chain is Ketoisovalerate oxidoreductase subunit VorA (vorA) from Pyrococcus horikoshii (strain ATCC 700860 / DSM 12428 / JCM 9974 / NBRC 100139 / OT-3).